The following is a 482-amino-acid chain: UDP-N-acetylmuramate--L-alanine ligase (482 aa).

111–117 lines the ATP pocket; sequence GTHGKTT.

This sequence belongs to the MurCDEF family.

It localises to the cytoplasm. It carries out the reaction UDP-N-acetyl-alpha-D-muramate + L-alanine + ATP = UDP-N-acetyl-alpha-D-muramoyl-L-alanine + ADP + phosphate + H(+). It participates in cell wall biogenesis; peptidoglycan biosynthesis. Cell wall formation. This is UDP-N-acetylmuramate--L-alanine ligase from Symbiobacterium thermophilum (strain DSM 24528 / JCM 14929 / IAM 14863 / T).